The primary structure comprises 534 residues: Probable alkaline/neutral invertase D (534 aa).

Residues Ser-7 and Ser-37 each carry the phosphoserine modification. At Thr-55 the chain carries Phosphothreonine. Phosphoserine is present on Ser-532.

The protein belongs to the glycosyl hydrolase 100 family.

It catalyses the reaction Hydrolysis of terminal non-reducing beta-D-fructofuranoside residues in beta-D-fructofuranosides.. Invertase that cleaves sucrose into glucose and fructose. This Arabidopsis thaliana (Mouse-ear cress) protein is Probable alkaline/neutral invertase D.